A 324-amino-acid polypeptide reads, in one-letter code: Zinc transporter ZIP1 (324 aa).

The Extracellular portion of the chain corresponds to 1–30 (MGPWGEPELLVWRPEAVASEPPVPVGLEVK). The chain crosses the membrane as a helical span at residues 31 to 51 (LGALVLLLVLTLLCSLVPICV). At 52–68 (LRRPGANHEGSASRQKA) the chain is on the cytoplasmic side. The chain crosses the membrane as a helical span at residues 69–89 (LSLVSCFAGGVFLATCLLDLL). Topologically, residues 90–104 (PDYLAAIDEALAALH) are extracellular. Residues 105 to 125 (VTLQFPLQEFILAMGFFLVLV) traverse the membrane as a helical segment. Topologically, residues 126 to 179 (MEQITLAYKEQSGPSPLEETRALLGTVNGGPQHWHDGPGVPQASGAPATPSALR) are cytoplasmic. A helical membrane pass occupies residues 180-200 (ACVLVFSLALHSVFEGLAVGL). The Extracellular portion of the chain corresponds to 201 to 206 (QRDRAR). A helical membrane pass occupies residues 207–227 (AMELCLALLLHKGILAVSLSL). Over 228 to 237 (RLLQSHLRAQ) the chain is Cytoplasmic. Residues 238 to 258 (VVAGCGILFSCMTPLGIGLGA) form a helical membrane-spanning segment. The Extracellular segment spans residues 259–272 (ALAESAGPLHQLAQ). Residues 273–293 (SVLEGMAAGTFLYITFLEILP) traverse the membrane as a helical segment. Topologically, residues 294-303 (QELASSEQRI) are cytoplasmic. Residues 304 to 324 (LKVILLLAGFALLTGLLFIQI) form a helical membrane-spanning segment.

The protein belongs to the ZIP transporter (TC 2.A.5) family. Ubiquitous. Expressed in most adult and fetal tissues including the epidermis.

The protein resides in the cell membrane. Its subcellular location is the endoplasmic reticulum membrane. It carries out the reaction Zn(2+)(in) = Zn(2+)(out). Inhibited by Ni(2+) ions. Fe(2+) ions do not inhibit zinc uptake. Functionally, transporter for the divalent cation Zn(2+). Mediates the influx of Zn(2+) into cells from extracellular space. Functions as the major importer of zinc from circulating blood plasma into prostate cells. In Homo sapiens (Human), this protein is Zinc transporter ZIP1.